The sequence spans 216 residues: DNA repair and recombination protein RadB (216 aa).

It belongs to the eukaryotic RecA-like protein family. RadB subfamily.

In terms of biological role, involved in DNA repair and in homologous recombination. May regulate the cleavage reactions of the branch-structured DNA. Has a very weak ATPase activity that is not stimulated by DNA. Binds DNA but does not promote DNA strands exchange. In Methanococcus maripaludis (strain C5 / ATCC BAA-1333), this protein is DNA repair and recombination protein RadB.